A 377-amino-acid chain; its full sequence is Guanine nucleotide-binding protein subunit beta (377 aa).

WD repeat units lie at residues 63–93 (GHTG…IVWN), 105–135 (LPCA…SIFS), 154–185 (GHRG…ILWD), 202–233 (GHTA…RLWD), 246–276 (GHEG…RLYD), 292–323 (GENG…YVWD), and 339–369 (SHRN…KIWA). Short sequence motifs (DWD box) lie at residues 220 to 235 (FISG…WDTR) and 263 to 278 (FGTG…YDIR).

It belongs to the WD repeat G protein beta family. G proteins are composed of 3 units, alpha, beta and gamma. Interacts with the gamma subunits GG1 and GG2. The dimers GB1-GG1 and GB1-GG2 interact with NDL1, NDL2 and NDL3. Interacts with WNK8. Interacts with XLG2. Interacts with RACK1A, RACK1B and RACK1C. Interacts with ZAR1 (via GBeta-binding domain). Expressed in seedlings (especially at the hypocotyl/root junction), roots, leaves (restricted to veins and guard cells), and flowers. Also present in hydathods. Expressed in guard cells, mesophyll tissue of cotyledons, trichomes and whole siliques, but not in seeds.

It is found in the cell membrane. The protein resides in the cytoplasm. It localises to the nucleus. Its function is as follows. Guanine nucleotide-binding proteins (G proteins) are involved as a modulator or transducer in various transmembrane signaling systems. The beta and gamma chains are required for the GTPase activity, for replacement of GDP by GTP, and for G protein-effector interaction. The heterotrimeric G-protein controls defense responses to necrotrophic and vascular fungi probably by modulating cell wall-related genes expression (e.g. lower xylose content in cell walls); involved in resistance to fungal pathogens such as Alternaria brassicicola and Fusarium oxysporum. Modulates root architecture (e.g. lateral root formation). Acts with XGL3 in the positive regulation of root waving and root skewing. Involved in the asymmetric division of zygote and specification of apical and basal cell lineages. The polypeptide is Guanine nucleotide-binding protein subunit beta (GB1) (Arabidopsis thaliana (Mouse-ear cress)).